A 486-amino-acid polypeptide reads, in one-letter code: ATP synthase subunit beta, chloroplastic (486 aa).

An ATP-binding site is contributed by 154–161; it reads GGAGVGKT.

Belongs to the ATPase alpha/beta chains family. As to quaternary structure, F-type ATPases have 2 components, CF(1) - the catalytic core - and CF(0) - the membrane proton channel. CF(1) has five subunits: alpha(3), beta(3), gamma(1), delta(1), epsilon(1). CF(0) has four main subunits: a(1), b(1), b'(1) and c(9-12).

Its subcellular location is the plastid. The protein resides in the chloroplast thylakoid membrane. It catalyses the reaction ATP + H2O + 4 H(+)(in) = ADP + phosphate + 5 H(+)(out). In terms of biological role, produces ATP from ADP in the presence of a proton gradient across the membrane. The catalytic sites are hosted primarily by the beta subunits. The sequence is that of ATP synthase subunit beta, chloroplastic from Dennstaedtia punctilobula (Hay-scented fern).